Reading from the N-terminus, the 195-residue chain is Imidazoleglycerol-phosphate dehydratase (195 aa).

The protein belongs to the imidazoleglycerol-phosphate dehydratase family.

The protein localises to the cytoplasm. The enzyme catalyses D-erythro-1-(imidazol-4-yl)glycerol 3-phosphate = 3-(imidazol-4-yl)-2-oxopropyl phosphate + H2O. Its pathway is amino-acid biosynthesis; L-histidine biosynthesis; L-histidine from 5-phospho-alpha-D-ribose 1-diphosphate: step 6/9. This is Imidazoleglycerol-phosphate dehydratase from Leuconostoc mesenteroides subsp. mesenteroides (strain ATCC 8293 / DSM 20343 / BCRC 11652 / CCM 1803 / JCM 6124 / NCDO 523 / NBRC 100496 / NCIMB 8023 / NCTC 12954 / NRRL B-1118 / 37Y).